Reading from the N-terminus, the 105-residue chain is Large ribosomal subunit protein uL24 (105 aa).

This sequence belongs to the universal ribosomal protein uL24 family. Part of the 50S ribosomal subunit.

Its function is as follows. One of two assembly initiator proteins, it binds directly to the 5'-end of the 23S rRNA, where it nucleates assembly of the 50S subunit. Functionally, one of the proteins that surrounds the polypeptide exit tunnel on the outside of the subunit. The polypeptide is Large ribosomal subunit protein uL24 (Clostridium kluyveri (strain ATCC 8527 / DSM 555 / NBRC 12016 / NCIMB 10680 / K1)).